A 310-amino-acid chain; its full sequence is Zinc transporter ZIP9 (310 aa).

A run of 8 helical transmembrane segments spans residues 7–27 (ISLL…IPLA), 35–55 (LKLI…AVII), 108–128 (ACIG…DQIG), 148–168 (ITTT…LGAA), 178–198 (LIVF…LVSF), 212–232 (HLLV…LGLS), 246–266 (GVAM…HVLP), and 289–309 (VEVV…VGHH).

The protein belongs to the ZIP transporter (TC 2.A.5) family. As to expression, expressed in brain, liver, ovary, and testis.

The protein localises to the golgi apparatus. The protein resides in the trans-Golgi network membrane. It localises to the cell membrane. Its subcellular location is the cytoplasm. It is found in the perinuclear region. The protein localises to the mitochondrion. The protein resides in the nucleus. The catalysed reaction is Zn(2+)(in) = Zn(2+)(out). Its function is as follows. Has dual functions as a membrane-bound androgen receptor and as an androgen-dependent zinc transporter both of which are mediated through G protein activation and are required for the androgen-dependent apoptotic response. Upon androgen binding, mediates apoptosis by directly activating a stimulatory G protein that leads to increased cAMP levels and MAP kinase activity and which is accompanied by increased intracellular free zinc levels. The chain is Zinc transporter ZIP9 from Micropogonias undulatus (Atlantic croaker).